A 175-amino-acid polypeptide reads, in one-letter code: Sec-independent protein translocase protein TatB (175 aa).

The chain crosses the membrane as a helical span at residues 1 to 21 (MLDLGLSKMALIGVVALVVLG). A disordered region spans residues 155–175 (SGAARVARHQPASLRRPTRFF).

It belongs to the TatB family. As to quaternary structure, the Tat system comprises two distinct complexes: a TatABC complex, containing multiple copies of TatA, TatB and TatC subunits, and a separate TatA complex, containing only TatA subunits. Substrates initially bind to the TatABC complex, which probably triggers association of the separate TatA complex to form the active translocon.

It localises to the cell inner membrane. Functionally, part of the twin-arginine translocation (Tat) system that transports large folded proteins containing a characteristic twin-arginine motif in their signal peptide across membranes. Together with TatC, TatB is part of a receptor directly interacting with Tat signal peptides. TatB may form an oligomeric binding site that transiently accommodates folded Tat precursor proteins before their translocation. The protein is Sec-independent protein translocase protein TatB of Burkholderia lata (strain ATCC 17760 / DSM 23089 / LMG 22485 / NCIMB 9086 / R18194 / 383).